A 459-amino-acid polypeptide reads, in one-letter code: tRNA modification GTPase MnmE (459 aa).

Arg-22, Glu-87, and Arg-126 together coordinate (6S)-5-formyl-5,6,7,8-tetrahydrofolate. In terms of domain architecture, TrmE-type G spans 221–381 (GINVAICGKP…LEESIEKAVL (161 aa)). Asn-231 is a K(+) binding site. Residues 231-236 (NVGKSS), 250-256 (TSIPGTT), and 275-278 (DTAG) contribute to the GTP site. Position 235 (Ser-235) interacts with Mg(2+). K(+)-binding residues include Thr-250, Ile-252, and Thr-255. Thr-256 is a Mg(2+) binding site. Lys-459 provides a ligand contact to (6S)-5-formyl-5,6,7,8-tetrahydrofolate.

The protein belongs to the TRAFAC class TrmE-Era-EngA-EngB-Septin-like GTPase superfamily. TrmE GTPase family. Homodimer. Heterotetramer of two MnmE and two MnmG subunits. Requires K(+) as cofactor.

Its subcellular location is the cytoplasm. In terms of biological role, exhibits a very high intrinsic GTPase hydrolysis rate. Involved in the addition of a carboxymethylaminomethyl (cmnm) group at the wobble position (U34) of certain tRNAs, forming tRNA-cmnm(5)s(2)U34. The protein is tRNA modification GTPase MnmE of Syntrophomonas wolfei subsp. wolfei (strain DSM 2245B / Goettingen).